A 371-amino-acid polypeptide reads, in one-letter code: Lysine racemase (371 aa).

Lys39 acts as the Proton acceptor in catalysis. Lys39 carries the post-translational modification N6-(pyridoxal phosphate)lysine. Residue Arg135 participates in substrate binding. The active-site Proton acceptor is the Tyr266. A substrate-binding site is contributed by Met313.

This sequence belongs to the alanine racemase family. In terms of assembly, homodimer. Pyridoxal 5'-phosphate serves as cofactor.

The catalysed reaction is L-lysine = D-lysine. Its function is as follows. Catalyzes the interconversion of D-lysine and L-lysine. Can also use arginine and ornithine, but not alanine. In Oenococcus oeni (strain ATCC BAA-331 / PSU-1), this protein is Lysine racemase.